Here is a 520-residue protein sequence, read N- to C-terminus: GMP synthase [glutamine-hydrolyzing] (520 aa).

Residues 12–202 form the Glutamine amidotransferase type-1 domain; it reads KIIVLDFGSQ…AFDVCGCTGD (191 aa). The Nucleophile role is filled by Cys-89. Active-site residues include His-176 and Glu-178. The GMPS ATP-PPase domain occupies 203–395; the sequence is WSMENFIDME…LGMPDAIVWR (193 aa). 230-236 provides a ligand contact to ATP; it reads SGGVDSS.

Homodimer.

The enzyme catalyses XMP + L-glutamine + ATP + H2O = GMP + L-glutamate + AMP + diphosphate + 2 H(+). The protein operates within purine metabolism; GMP biosynthesis; GMP from XMP (L-Gln route): step 1/1. Functionally, catalyzes the synthesis of GMP from XMP. The protein is GMP synthase [glutamine-hydrolyzing] of Enterococcus faecalis (strain ATCC 700802 / V583).